Here is a 522-residue protein sequence, read N- to C-terminus: Cytochrome P450 monooxygenase FGSG_08207 (522 aa).

The chain crosses the membrane as a helical span at residues 10-30 (LLLSKPVVLGLAACALLFLIG). 2 N-linked (GlcNAc...) asparagine glycosylation sites follow: N104 and N155. C441 contributes to the heme binding site.

The protein belongs to the cytochrome P450 family. It depends on heme as a cofactor.

The protein localises to the membrane. The protein operates within secondary metabolite biosynthesis. In terms of biological role, cytochrome P450 monooxygenase; part of the gene cluster that mediates the biosynthesis of the lipopeptide fusaristatin A. Fusaristatin A consists of a polyketide chain linked to three amino acid residues glutamine (Gln), dehydroalanine (dehydro-Ala), and beta-aminoisobutyric acid. The biosynthesis starts with formation of a linear polyketide chain by the highly reducing polyketide synthase PKS6. The gene cluster does not contain an acyl-CoA ligase or an acyl-transferase, and it is therefore predicted that the polyketide is transferred directly to the nonribosomal peptide synthetase NRPS7. Modules 1-3 from NRPS7 incorporate dehydro-Ala, Gln, and beta-aminoisobutyric acid in the compound, which is released by cyclization. The beta-aminoisobutyric acid units are most likely not freely available to the NRPS, but can be synthesized from thymine, which requires a dehydrogenase, a monooxygenase, and an aminotransferase. The fusaristatin A cluster contains a cytochrome P450 monooxygenase (FGSG_08207) and an aminotransferase (FGSG_17085), which theoretically can perform two of the enzymatic steps. The enzymes may however also be involved in biosynthesis of dehydroalanine or modification of the polyketide. The dehydro-Ala residue can be a result of cyclization, where serine is dehydrated. The last gene of the cluster encodes a protein with an A/B barrel domain found in variable enzymes, which hampers functional prediction. The sequence is that of Cytochrome P450 monooxygenase FGSG_08207 from Gibberella zeae (strain ATCC MYA-4620 / CBS 123657 / FGSC 9075 / NRRL 31084 / PH-1) (Wheat head blight fungus).